A 701-amino-acid polypeptide reads, in one-letter code: DNA ligase (701 aa).

Residues 43 to 47 (DAAYD), 92 to 93 (SL), and glutamate 126 contribute to the NAD(+) site. The active-site N6-AMP-lysine intermediate is lysine 128. NAD(+) contacts are provided by arginine 149, glutamate 186, lysine 302, and lysine 326. Residues cysteine 420, cysteine 423, cysteine 444, and cysteine 450 each coordinate Zn(2+). One can recognise a BRCT domain in the interval 623–701 (ANDSPVAGKT…EDEWFDLIGA (79 aa)).

This sequence belongs to the NAD-dependent DNA ligase family. LigA subfamily. It depends on Mg(2+) as a cofactor. The cofactor is Mn(2+).

The enzyme catalyses NAD(+) + (deoxyribonucleotide)n-3'-hydroxyl + 5'-phospho-(deoxyribonucleotide)m = (deoxyribonucleotide)n+m + AMP + beta-nicotinamide D-nucleotide.. DNA ligase that catalyzes the formation of phosphodiester linkages between 5'-phosphoryl and 3'-hydroxyl groups in double-stranded DNA using NAD as a coenzyme and as the energy source for the reaction. It is essential for DNA replication and repair of damaged DNA. The protein is DNA ligase of Maricaulis maris (strain MCS10) (Caulobacter maris).